Consider the following 492-residue polypeptide: Cytochrome P450 26A1 (492 aa).

Position 437 (cysteine 437) interacts with heme.

This sequence belongs to the cytochrome P450 family. Heme is required as a cofactor.

The protein localises to the endoplasmic reticulum membrane. It is found in the microsome membrane. The enzyme catalyses all-trans-retinoate + reduced [NADPH--hemoprotein reductase] + O2 = all-trans-(4S)-hydroxyretinoate + oxidized [NADPH--hemoprotein reductase] + H2O + H(+). The catalysed reaction is all-trans-(4S)-hydroxyretinoate + reduced [NADPH--hemoprotein reductase] + O2 = all-trans-(4S,16)-dihydroxyretinoate + oxidized [NADPH--hemoprotein reductase] + H2O + H(+). It carries out the reaction all-trans-retinoate + reduced [NADPH--hemoprotein reductase] + O2 = all-trans-18-hydroxyretinoate + oxidized [NADPH--hemoprotein reductase] + H2O + H(+). Functionally, a cytochrome P450 monooxygenase involved in the metabolism of retinoates (RAs), the active metabolites of vitamin A, and critical signaling molecules in animals. RAs exist as at least four different isomers: all-trans-RA (atRA), 9-cis-RA, 13-cis-RA, and 9,13-dicis-RA, where atRA is considered to be the biologically active isomer, although 9-cis-RA and 13-cis-RA also have activity. Catalyzes the hydroxylation of atRA primarily at C-4 and C-18, thereby contributing to the regulation of atRA homeostasis and signaling. Hydroxylation of atRA limits its biological activity and initiates a degradative process leading to its eventual elimination. Involved in the convertion of atRA to all-trans-4-oxo-RA. Able to metabolize other RAs such as 9-cis, 13-cis and 9,13-di-cis RA. Can oxidize all-trans-13,14-dihydroretinoate (DRA) to metabolites which could include all-trans-4-oxo-DRA, all-trans-4-hydroxy-DRA, all-trans-5,8-epoxy-DRA, and all-trans-18-hydroxy-DRA. May play a role in the oxidative metabolism of xenobiotics such as tazarotenic acid. In Gallus gallus (Chicken), this protein is Cytochrome P450 26A1 (CYP26A1).